Here is a 470-residue protein sequence, read N- to C-terminus: MAEVPHHNIPAVDMLNATSRLQLEAQELRNNKPNWGSYFRSQMIQEDDYNFITSFENAKSKEERDQVLAANNANGQAAKTMANLITQVAKDQNVRYVLTLFDDMLQEDKSRVELFHSAAARQKRTVWSQYLGILQRQDNFIVNQMSSIIAKLACFGTTRMEGQDLQYYFSFLKEQLKNSTTNDYMNTTARCLQMMLRHDEYRHEFVDSDGVQTLVTALNGKTNFQLQYQLIFAVWCLTFNADIARKAPSLGLIQALGDILSESTKEKVIRIILASFVNILSKVDEREVKREAALQMVQCKTLKTLELMDAKKYDDPDLEDDVKFLTEELTLSVHDLSSYDEYYSEVRSGRLQWSPVHKSEKFWRENASKFNDKQFEVVKILIKLLESSHDPLILCVASHDIGEYVRHYPRGKTVVEQYQGKAAVMRLLTAEDPNVRYHALLAVQKLMVHNWEYLGKQLDSDVQTDTVAVK.

The protein belongs to the V-ATPase H subunit family. V-ATPase is a heteromultimeric enzyme made up of two complexes: the ATP-hydrolytic V1 complex and the proton translocation V0 complex. The V1 complex consists of three catalytic AB heterodimers that form a heterohexamer, three peripheral stalks each consisting of EG heterodimers, one central rotor including subunits D and F, and the regulatory subunits C and H. The proton translocation complex V0 consists of the proton transport subunit a, a ring of proteolipid subunits c9c'', rotary subunit d, subunits e and f, and the accessory subunits vah-19/Ac45 and vah-20/PRR.

Subunit of the V1 complex of vacuolar(H+)-ATPase (V-ATPase), a multisubunit enzyme composed of a peripheral complex (V1) that hydrolyzes ATP and a membrane integral complex (V0) that translocates protons. V-ATPase is responsible for acidifying and maintaining the pH of intracellular compartments and in some cell types, is targeted to the plasma membrane, where it is responsible for acidifying the extracellular environment. Subunit H is essential for V-ATPase activity, but not for the assembly of the complex. This chain is Probable V-type proton ATPase subunit H 2, found in Caenorhabditis elegans.